Here is a 285-residue protein sequence, read N- to C-terminus: Energy-coupling factor transporter ATP-binding protein EcfA2 (285 aa).

Residues 6–242 (LKVEELNYNY…KEVIRKVNLR (237 aa)) form the ABC transporter domain. 39–46 (GGNGVGKS) contributes to the ATP binding site.

It belongs to the ABC transporter superfamily. Energy-coupling factor EcfA family. In terms of assembly, forms a stable energy-coupling factor (ECF) transporter complex composed of 2 membrane-embedded substrate-binding proteins (S component), 2 ATP-binding proteins (A component) and 2 transmembrane proteins (T component).

Its subcellular location is the cell membrane. Its function is as follows. ATP-binding (A) component of a common energy-coupling factor (ECF) ABC-transporter complex. Unlike classic ABC transporters this ECF transporter provides the energy necessary to transport a number of different substrates. This Clostridium perfringens (strain SM101 / Type A) protein is Energy-coupling factor transporter ATP-binding protein EcfA2.